Consider the following 120-residue polypeptide: Immunoglobulin lambda variable 2-14 (120 aa).

The N-terminal stretch at 1–19 is a signal peptide; sequence MAWALLLLTLLTQGTGSWA. Glutamine 20 bears the Pyrrolidone carboxylic acid mark. Residues 20–44 are framework-1; sequence QSALTQPASVSGSPGQSITISCTGT. Residues 20–119 enclose the Ig-like domain; sequence QSALTQPASV…SSYTSSSTLH (100 aa). Cysteine 41 and cysteine 109 are oxidised to a cystine. Residues 45–53 are complementarity-determining-1; it reads SSDVGGYNY. Residues 54-70 form a framework-2 region; it reads VSWYQQHPGKAPKLMIY. The complementarity-determining-2 stretch occupies residues 71 to 73; that stretch reads EVS. Positions 74 to 109 are framework-3; it reads NRPSGVSNRFSGSKSGNTASLTISGLQAEDEADYYC. The interval 110–119 is complementarity-determining-3; the sequence is SSYTSSSTLH.

Immunoglobulins are composed of two identical heavy chains and two identical light chains; disulfide-linked.

The protein resides in the secreted. The protein localises to the cell membrane. V region of the variable domain of immunoglobulin light chains that participates in the antigen recognition. Immunoglobulins, also known as antibodies, are membrane-bound or secreted glycoproteins produced by B lymphocytes. In the recognition phase of humoral immunity, the membrane-bound immunoglobulins serve as receptors which, upon binding of a specific antigen, trigger the clonal expansion and differentiation of B lymphocytes into immunoglobulins-secreting plasma cells. Secreted immunoglobulins mediate the effector phase of humoral immunity, which results in the elimination of bound antigens. The antigen binding site is formed by the variable domain of one heavy chain, together with that of its associated light chain. Thus, each immunoglobulin has two antigen binding sites with remarkable affinity for a particular antigen. The variable domains are assembled by a process called V-(D)-J rearrangement and can then be subjected to somatic hypermutations which, after exposure to antigen and selection, allow affinity maturation for a particular antigen. This chain is Immunoglobulin lambda variable 2-14, found in Homo sapiens (Human).